The chain runs to 102 residues: Small ribosomal subunit protein uS10 (102 aa).

It belongs to the universal ribosomal protein uS10 family. Part of the 30S ribosomal subunit.

In terms of biological role, involved in the binding of tRNA to the ribosomes. This is Small ribosomal subunit protein uS10 from Kosmotoga olearia (strain ATCC BAA-1733 / DSM 21960 / TBF 19.5.1).